A 299-amino-acid chain; its full sequence is Oxygen-dependent coproporphyrinogen-III oxidase (299 aa).

S92 contacts substrate. A divalent metal cation-binding residues include H96 and H106. Residue H106 is the Proton donor of the active site. 108–110 (NVR) lines the substrate pocket. A divalent metal cation-binding residues include H145 and H175. The segment at 240 to 275 (YVEFNLVWDRGTLFGLQTGGRTESILMSMPPLVRWE) is important for dimerization. A substrate-binding site is contributed by 258–260 (GGR).

It belongs to the aerobic coproporphyrinogen-III oxidase family. Homodimer. A divalent metal cation is required as a cofactor.

It localises to the cytoplasm. It catalyses the reaction coproporphyrinogen III + O2 + 2 H(+) = protoporphyrinogen IX + 2 CO2 + 2 H2O. Its pathway is porphyrin-containing compound metabolism; protoporphyrin-IX biosynthesis; protoporphyrinogen-IX from coproporphyrinogen-III (O2 route): step 1/1. Its function is as follows. Involved in the heme biosynthesis. Catalyzes the aerobic oxidative decarboxylation of propionate groups of rings A and B of coproporphyrinogen-III to yield the vinyl groups in protoporphyrinogen-IX. This is Oxygen-dependent coproporphyrinogen-III oxidase from Salmonella typhi.